We begin with the raw amino-acid sequence, 622 residues long: Apical membrane antigen 1 (622 aa).

An N-terminal signal peptide occupies residues Met1–Gly24. Residues Gln25 to Lys546 are Extracellular-facing. Cystine bridges form between Cys149-Cys302, Cys217-Cys247, Cys263-Cys275, Cys320-Cys418, and Cys337-Cys409. N-linked (GlcNAc...) asparagine glycosylation is present at Asn162. Residues Asn286, Asn371, Asn421, Asn422, and Asn499 are each glycosylated (N-linked (GlcNAc...) asparagine). Intrachain disulfides connect Cys443/Cys502, Cys490/Cys507, and Cys492/Cys509. Residues Ile547 to Tyr567 traverse the membrane as a helical segment. Over Lys568 to Tyr622 the chain is Cytoplasmic. Basic and acidic residues predominate over residues Lys578 to Glu594. The interval Lys578–Lys607 is disordered.

It belongs to the apicomplexan parasites AMA1 family.

Its subcellular location is the membrane. In terms of biological role, involved in parasite invasion of erythrocytes. This Plasmodium falciparum (isolate FC27 / Papua New Guinea) protein is Apical membrane antigen 1 (AMA-1).